We begin with the raw amino-acid sequence, 774 residues long: 5-methyltetrahydropteroyltriglutamate--homocysteine methyltransferase (774 aa).

5-methyltetrahydropteroyltri-L-glutamate-binding positions include Arg-23–Lys-26 and Lys-123. L-homocysteine contacts are provided by residues Ile-446–Ser-448 and Glu-499. L-methionine is bound by residues Ile-446–Ser-448 and Glu-499. 5-methyltetrahydropteroyltri-L-glutamate-binding positions include Arg-530–Cys-531 and Trp-576. An L-homocysteine-binding site is contributed by Asp-614. Residue Asp-614 coordinates L-methionine. Glu-620 lines the 5-methyltetrahydropteroyltri-L-glutamate pocket. Zn(2+) is bound by residues His-656, Cys-658, and Glu-680. Catalysis depends on His-709, which acts as the Proton donor. Residue Cys-741 participates in Zn(2+) binding.

Belongs to the vitamin-B12 independent methionine synthase family. The cofactor is Zn(2+).

It carries out the reaction 5-methyltetrahydropteroyltri-L-glutamate + L-homocysteine = tetrahydropteroyltri-L-glutamate + L-methionine. It functions in the pathway amino-acid biosynthesis; L-methionine biosynthesis via de novo pathway; L-methionine from L-homocysteine (MetE route): step 1/1. Catalyzes the transfer of a methyl group from 5-methyltetrahydrofolate to homocysteine resulting in methionine formation. This is 5-methyltetrahydropteroyltriglutamate--homocysteine methyltransferase from Aliivibrio fischeri (strain MJ11) (Vibrio fischeri).